The sequence spans 645 residues: Cytochrome c oxidase subunit 1 (645 aa).

Residues 8–28 (LNYFYFSMWTGLSGAALATMI) traverse the membrane as a helical segment. Ca(2+) is bound by residues Glu31 and Gly36. His54 serves as a coordination point for Fe(II)-heme a. The next 8 membrane-spanning stretches (helical) occupy residues 56–76 (LIMV…NFLI), 90–110 (LNSI…KIAF), 247–267 (VLSV…LTLI), 282–302 (VLIP…AIVT), 337–357 (LFWF…FGVA), 376–396 (IWAV…HMYL), 410–430 (ITIM…LTLA), and 438–458 (LVFL…FTGM). A Cu cation-binding site is contributed by His343. A cross-link (1'-histidyl-3'-tyrosine (His-Tyr)) is located at residues 343 to 347 (HPEVY). Position 347 (Tyr347) interacts with O2. The Cu cation site is built by His392 and His393. His470 and Asp471 together coordinate Mg(2+). 3 helical membrane passes run 475-495 (VVAH…FTGL), 513-533 (FLHL…MFFL), and 555-575 (LASC…FGIF). Residue His478 participates in heme a3 binding. His480 serves as a coordination point for Fe(II)-heme a.

It belongs to the heme-copper respiratory oxidase family. Component of the cytochrome c oxidase (complex IV, CIV), a multisubunit enzyme composed of a catalytic core of 3 subunits and several supernumerary subunits. The complex exists as a monomer or a dimer and forms supercomplexes (SCs) in the inner mitochondrial membrane with ubiquinol-cytochrome c oxidoreductase (cytochrome b-c1 complex, complex III, CIII). Requires heme as cofactor. The cofactor is Cu cation.

The protein localises to the mitochondrion inner membrane. It catalyses the reaction 4 Fe(II)-[cytochrome c] + O2 + 8 H(+)(in) = 4 Fe(III)-[cytochrome c] + 2 H2O + 4 H(+)(out). It participates in energy metabolism; oxidative phosphorylation. Its function is as follows. Component of the cytochrome c oxidase, the last enzyme in the mitochondrial electron transport chain which drives oxidative phosphorylation. The respiratory chain contains 3 multisubunit complexes succinate dehydrogenase (complex II, CII), ubiquinol-cytochrome c oxidoreductase (cytochrome b-c1 complex, complex III, CIII) and cytochrome c oxidase (complex IV, CIV), that cooperate to transfer electrons derived from NADH and succinate to molecular oxygen, creating an electrochemical gradient over the inner membrane that drives transmembrane transport and the ATP synthase. Cytochrome c oxidase is the component of the respiratory chain that catalyzes the reduction of oxygen to water. Electrons originating from reduced cytochrome c in the intermembrane space (IMS) are transferred via the dinuclear copper A center (CU(A)) of subunit 2 and heme A of subunit 1 to the active site in subunit 1, a binuclear center (BNC) formed by heme A3 and copper B (CU(B)). The BNC reduces molecular oxygen to 2 water molecules using 4 electrons from cytochrome c in the IMS and 4 protons from the mitochondrial matrix. The protein is Cytochrome c oxidase subunit 1 (COI) of Paramecium tetraurelia.